The following is a 427-amino-acid chain: Glutamate-1-semialdehyde 2,1-aminomutase (427 aa).

K265 is modified (N6-(pyridoxal phosphate)lysine).

It belongs to the class-III pyridoxal-phosphate-dependent aminotransferase family. HemL subfamily. In terms of assembly, homodimer. Pyridoxal 5'-phosphate is required as a cofactor.

It is found in the cytoplasm. It carries out the reaction (S)-4-amino-5-oxopentanoate = 5-aminolevulinate. It functions in the pathway porphyrin-containing compound metabolism; protoporphyrin-IX biosynthesis; 5-aminolevulinate from L-glutamyl-tRNA(Glu): step 2/2. The sequence is that of Glutamate-1-semialdehyde 2,1-aminomutase from Bordetella petrii (strain ATCC BAA-461 / DSM 12804 / CCUG 43448).